A 629-amino-acid chain; its full sequence is tRNA uridine 5-carboxymethylaminomethyl modification enzyme MnmG (629 aa).

FAD-binding positions include 14 to 19 (GAGHAG), Val126, and Ser181. An NAD(+)-binding site is contributed by 273-287 (GPRYCPSIEDKVVRF). Residue Gln370 coordinates FAD.

The protein belongs to the MnmG family. In terms of assembly, homodimer. Heterotetramer of two MnmE and two MnmG subunits. FAD serves as cofactor.

Its subcellular location is the cytoplasm. Functionally, NAD-binding protein involved in the addition of a carboxymethylaminomethyl (cmnm) group at the wobble position (U34) of certain tRNAs, forming tRNA-cmnm(5)s(2)U34. The protein is tRNA uridine 5-carboxymethylaminomethyl modification enzyme MnmG of Bacillus cereus (strain ZK / E33L).